Here is a 552-residue protein sequence, read N- to C-terminus: Carotenoid cleavage dioxygenase 8 homolog A, chloroplastic (552 aa).

Residues 1–43 (MATSLTLIATPCTAPRSSSSFALAPRLPPRCSNATAARRRAVR) constitute a chloroplast transit peptide. Residues 32 to 73 (SNATAARRRAVRATTLQSDQEPAGSGDSGATTTKLSASTSVR) form a disordered region. A compositionally biased stretch (polar residues) spans 59–72 (SGATTTKLSASTSV). Fe cation is bound by residues His239, His289, His356, and His543.

Belongs to the carotenoid oxygenase family. The cofactor is Fe(2+). Highly expressed in panicles, inflorescences and parenchyma cells of the root stele, and at lower levels in shoot apex, leaf buds and xylem parenchyma cells of the stem.

The protein localises to the plastid. It localises to the chloroplast. In terms of biological role, may be involved in strigolactones biosynthesis. This chain is Carotenoid cleavage dioxygenase 8 homolog A, chloroplastic (CCD8A), found in Oryza sativa subsp. japonica (Rice).